Consider the following 103-residue polypeptide: Histone H4 (103 aa).

The segment covering 1–14 (MSGRGKGGKGLGKG) has biased composition (gly residues). The segment at 1-20 (MSGRGKGGKGLGKGGAKRHR) is disordered. Residue Ser-2 is modified to N-acetylserine. The residue at position 17 (Lys-17) is an N6-acetyllysine. A DNA-binding region spans residues 17 to 21 (KRHRK). Lys-21 is subject to N6-methyllysine.

Belongs to the histone H4 family. As to quaternary structure, the nucleosome is a histone octamer containing two molecules each of H2A, H2B, H3 and H4 assembled in one H3-H4 heterotetramer and two H2A-H2B heterodimers. The octamer wraps approximately 147 bp of DNA.

Its subcellular location is the nucleus. The protein localises to the chromosome. Functionally, core component of nucleosome. Nucleosomes wrap and compact DNA into chromatin, limiting DNA accessibility to the cellular machineries which require DNA as a template. Histones thereby play a central role in transcription regulation, DNA repair, DNA replication and chromosomal stability. DNA accessibility is regulated via a complex set of post-translational modifications of histones, also called histone code, and nucleosome remodeling. In Capsicum annuum (Capsicum pepper), this protein is Histone H4.